A 162-amino-acid chain; its full sequence is UPF0114 protein SO_3997 (162 aa).

3 helical membrane passes run 10–32, 53–75, and 136–156; these read YASRWIMAPIYLGLSLVLLGLGI, LVLVTLSLIDITLVGGLIVMVMF, and IMWYLLIHITFVLSAFAMGYL.

Belongs to the UPF0114 family.

It is found in the cell membrane. In Shewanella oneidensis (strain ATCC 700550 / JCM 31522 / CIP 106686 / LMG 19005 / NCIMB 14063 / MR-1), this protein is UPF0114 protein SO_3997.